The sequence spans 130 residues: MARVTVEDCIDKVDNRFDLVLLAAHRARMISSGSQLTIDRDNDKNPVVSLREIAEQTVSPEDLREELVHSLQKFVEVDEPEQDTVPLIGSVGASVDADDTEVALERMTEEELLKGLEGLAPPEEQPEEDE.

The tract at residues 109–130 is disordered; that stretch reads EEELLKGLEGLAPPEEQPEEDE.

It belongs to the RNA polymerase subunit omega family. As to quaternary structure, the RNAP catalytic core consists of 2 alpha, 1 beta, 1 beta' and 1 omega subunit. When a sigma factor is associated with the core the holoenzyme is formed, which can initiate transcription.

The enzyme catalyses RNA(n) + a ribonucleoside 5'-triphosphate = RNA(n+1) + diphosphate. Its function is as follows. Promotes RNA polymerase assembly. Latches the N- and C-terminal regions of the beta' subunit thereby facilitating its interaction with the beta and alpha subunits. This is DNA-directed RNA polymerase subunit omega from Rhodopseudomonas palustris (strain BisB5).